Consider the following 750-residue polypeptide: Serine/threonine-protein kinase GE16371 (750 aa).

2 Doublecortin domains span residues 159–245 and 315–398; these read LRIK…VEYN and RIVT…AEDF. The 259-residue stretch at 479-737 folds into the Protein kinase domain; the sequence is YTLGKIIGDG…SEDILDHYWT (259 aa). ATP is bound by residues 485 to 493 and Lys508; that span reads IGDGNFAIV. Catalysis depends on Asp600, which acts as the Proton acceptor.

It belongs to the protein kinase superfamily. CAMK Ser/Thr protein kinase family. CaMK subfamily.

The enzyme catalyses L-seryl-[protein] + ATP = O-phospho-L-seryl-[protein] + ADP + H(+). It catalyses the reaction L-threonyl-[protein] + ATP = O-phospho-L-threonyl-[protein] + ADP + H(+). The chain is Serine/threonine-protein kinase GE16371 from Drosophila yakuba (Fruit fly).